A 408-amino-acid polypeptide reads, in one-letter code: GPI transamidase component GAB1 homolog (408 aa).

The next 10 helical transmembrane spans lie at 9–29, 66–86, 88–108, 125–145, 149–169, 207–227, 266–286, 303–323, 339–359, and 370–390; these read LLGL…TWIA, VFYQ…LGGI, VTRF…YLIA, PLWI…GIAC, MILN…SYAI, IFVV…FFLN, FFLF…SIRL, LFKA…LPIF, AIVF…TLGC, and LILA…LLLV. The may be involved in recognition of long-chain fatty acids in GPI stretch occupies residues 247–267; it reads PNLGLWWYFFTEMFNEFRTFF.

The protein belongs to the PIGU family. As to quaternary structure, forms a complex with PIG-S homolog, PIG-T homolog and GPI8.

It localises to the endoplasmic reticulum membrane. Its pathway is glycolipid biosynthesis; glycosylphosphatidylinositol-anchor biosynthesis. Its function is as follows. Component of the GPI transamidase complex. May be involved in the recognition of either the GPI attachment signal or the lipid portion of GPI. The polypeptide is GPI transamidase component GAB1 homolog (Schizosaccharomyces pombe (strain 972 / ATCC 24843) (Fission yeast)).